Consider the following 364-residue polypeptide: Fructose-bisphosphate aldolase B (364 aa).

Substrate is bound by residues R56 and K147. The Proton acceptor role is filled by E188. The active-site Schiff-base intermediate with dihydroxyacetone-P is K230.

The protein belongs to the class I fructose-bisphosphate aldolase family. Homotetramer.

It localises to the cytoplasm. Its subcellular location is the cytoskeleton. The protein localises to the microtubule organizing center. The protein resides in the centrosome. It is found in the centriolar satellite. The catalysed reaction is beta-D-fructose 1,6-bisphosphate = D-glyceraldehyde 3-phosphate + dihydroxyacetone phosphate. It functions in the pathway carbohydrate degradation; glycolysis; D-glyceraldehyde 3-phosphate and glycerone phosphate from D-glucose: step 4/4. This Sparus aurata (Gilthead sea bream) protein is Fructose-bisphosphate aldolase B (aldob).